A 475-amino-acid chain; its full sequence is Ribulose bisphosphate carboxylase large chain (475 aa).

Positions 1-2 are excised as a propeptide; sequence MS. P3 bears the N-acetylproline mark. K14 is modified (N6,N6,N6-trimethyllysine). Substrate-binding residues include N123 and T173. Catalysis depends on K175, which acts as the Proton acceptor. K177 provides a ligand contact to substrate. The Mg(2+) site is built by K201, D203, and E204. Position 201 is an N6-carboxylysine (K201). Catalysis depends on H294, which acts as the Proton acceptor. Substrate contacts are provided by R295, H327, and S379.

Belongs to the RuBisCO large chain family. Type I subfamily. In terms of assembly, heterohexadecamer of 8 large chains and 8 small chains; disulfide-linked. The disulfide link is formed within the large subunit homodimers. Mg(2+) is required as a cofactor. Post-translationally, the disulfide bond which can form in the large chain dimeric partners within the hexadecamer appears to be associated with oxidative stress and protein turnover.

Its subcellular location is the plastid. The protein resides in the chloroplast. The enzyme catalyses 2 (2R)-3-phosphoglycerate + 2 H(+) = D-ribulose 1,5-bisphosphate + CO2 + H2O. It carries out the reaction D-ribulose 1,5-bisphosphate + O2 = 2-phosphoglycolate + (2R)-3-phosphoglycerate + 2 H(+). RuBisCO catalyzes two reactions: the carboxylation of D-ribulose 1,5-bisphosphate, the primary event in carbon dioxide fixation, as well as the oxidative fragmentation of the pentose substrate in the photorespiration process. Both reactions occur simultaneously and in competition at the same active site. This Equisetum arvense (Field horsetail) protein is Ribulose bisphosphate carboxylase large chain.